Here is a 252-residue protein sequence, read N- to C-terminus: Receptor expression-enhancing protein 2 (252 aa).

The next 2 helical transmembrane spans lie at 1 to 21 (MVSW…YPAY) and 35 to 55 (YVKW…ETLT). Ser-150 is subject to Phosphoserine. Residues 165 to 252 (LQRPDGRLRP…KKTSGGGDSA (88 aa)) are disordered. Residues 203 to 217 (SRTEASEDDMGDKAP) show a composition bias toward basic and acidic residues.

Belongs to the DP1 family. As to quaternary structure, interacts with odorant receptor proteins. Detected in brain, heart and skeletal muscle, and at low levels in placenta, kidney and pancreas. Expressed in circumvallate papillae.

The protein resides in the membrane. Required for endoplasmic reticulum (ER) network formation, shaping and remodeling. May enhance the cell surface expression of odorant receptors. This chain is Receptor expression-enhancing protein 2 (REEP2), found in Homo sapiens (Human).